The following is an 86-amino-acid chain: Large ribosomal subunit protein bL27 (86 aa).

The tract at residues 1–21 is disordered; it reads MAHKKGASSSRNGRDSAAQRL.

The protein belongs to the bacterial ribosomal protein bL27 family.

The sequence is that of Large ribosomal subunit protein bL27 (rpmA) from Mycobacterium tuberculosis (strain CDC 1551 / Oshkosh).